We begin with the raw amino-acid sequence, 420 residues long: MSQLIDRRQNAGKKSTVNRQRFLRRYKSQIKKAVSEAVGKRSITEIDQGEQITIPAKDIYEPQFHRGHGGHIERVLPGNDNFIAGDRIKRPGGGAGGAGGNASDSGEGEDNFVFELSREEFLELYFEDLELPDLVKKELARISTYKTVRAGVTTSGIPNNINVLRSMKQATGRRVALASPYKKRLKEAEEELERLKQLTNPDKIDLLKLERDIEFFKKKIQTVPFIDTIDLRYNHRVRVPSPSTQAVMFCVMDVSGSMDEAKKDIAKRFFILLYMFLTKNYEKIELVFIRHHTSAKEVNEEEFFYSRETGGTVVSSALELLNTIIEARYPPQAWNIYVAQASDGDNWNADSPYCQELLQEKIMPLLQYFAYIEIMPRHHQSLWEVYQQVKERYPNFAMENIDNVADIYPVFRELFKRKTV.

Positions 83 to 107 are disordered; it reads IAGDRIKRPGGGAGGAGGNASDSGE. Gly residues predominate over residues 91–100; that stretch reads PGGGAGGAGG.

Belongs to the UPF0229 family.

The sequence is that of UPF0229 protein LPC_3097 from Legionella pneumophila (strain Corby).